The primary structure comprises 514 residues: Cilia- and flagella-associated protein 53 (514 aa).

Coiled coils occupy residues 91–176 and 205–478; these read VINT…EKKV and WEED…AGLA. Disordered regions lie at residues 261–296 and 495–514; these read QNKA…QDKI and QALS…KPPL.

It belongs to the CFAP53 family. In terms of assembly, microtubule inner protein component of sperm flagellar doublet microtubules. Interacts with PIERCE1 and PIERCE2; the interactions link outer dynein arms docking complex (ODA-DC) to the internal microtubule inner proteins (MIP) in cilium axoneme. Interacts with CCDC38. Interacts with CCDC42 and IFT88. Interacts with centriolar satellite proteins PIBF1/CEP90 and PCM1. Interacts with dyneins DNAIC1, DNAIC2 AND DNAH11 and with ODA-DC component ODAD4/TTC25. As to expression, expressed predominantly in testis (at protein level). In embryos at 8 dpc, specifically expressed in the node, in particular within the pit cells that are located at the center of the node and have rotating monocilia on their apical surface. In the adult, expressed in epithelial cells of the trachea, brain ventricles, oviduct and testis.

It localises to the cytoplasm. Its subcellular location is the cytoskeleton. It is found in the cilium axoneme. The protein localises to the flagellum axoneme. The protein resides in the microtubule organizing center. It localises to the centrosome. Its subcellular location is the centriolar satellite. It is found in the spindle pole. Functionally, microtubule inner protein (MIP) part of the dynein-decorated doublet microtubules (DMTs) in cilia axoneme, which is required for motile cilia beating. Regulates motility patterns of both 9+0 and 9+2 motile cilia through differential localization and recruitment of axonemal dynein components. Required for centriolar satellite integrity and non-motile cilium assembly. Required for motile cilium formation. Through its role in the beating of primary cilia, involved in the establishment of organ laterality during embryogenesis. Required for sperm flagellum biogenesis and is essential for male fertility. This Mus musculus (Mouse) protein is Cilia- and flagella-associated protein 53.